We begin with the raw amino-acid sequence, 379 residues long: Putative cysteine desulfurase IscS 1 (379 aa).

Pyridoxal 5'-phosphate-binding positions include 71-72 (GT), Asn151, Gln179, and 199-201 (SGH). Residue Lys202 is modified to N6-(pyridoxal phosphate)lysine. Thr237 serves as a coordination point for pyridoxal 5'-phosphate. Cys325 (cysteine persulfide intermediate) is an active-site residue. Cys325 contributes to the [2Fe-2S] cluster binding site.

This sequence belongs to the class-V pyridoxal-phosphate-dependent aminotransferase family. NifS/IscS subfamily. Pyridoxal 5'-phosphate is required as a cofactor.

The enzyme catalyses (sulfur carrier)-H + L-cysteine = (sulfur carrier)-SH + L-alanine. In terms of biological role, catalyzes the removal of elemental sulfur from cysteine to produce alanine. The protein is Putative cysteine desulfurase IscS 1 (iscS1) of Bacillus subtilis (strain 168).